The following is a 509-amino-acid chain: Putative Rieske 2Fe-2S iron-sulfur protein YhfW (509 aa).

In terms of domain architecture, Rieske spans 423–509; sequence KPDVQFEDIS…IKPLKQIDLD (87 aa). Residues C463, H465, C481, and H484 each coordinate [2Fe-2S] cluster. An intrachain disulfide couples C468 to C483.

It belongs to the Rieske iron-sulfur protein family. It depends on [2Fe-2S] cluster as a cofactor.

This Bacillus subtilis (strain 168) protein is Putative Rieske 2Fe-2S iron-sulfur protein YhfW (yhfW).